We begin with the raw amino-acid sequence, 350 residues long: Methylthioribose-1-phosphate isomerase (350 aa).

Substrate-binding positions include 48 to 50 (RGA), arginine 93, and glutamine 198. Aspartate 239 functions as the Proton donor in the catalytic mechanism. Residue 249-250 (NK) participates in substrate binding.

Belongs to the eIF-2B alpha/beta/delta subunits family. MtnA subfamily.

The catalysed reaction is 5-(methylsulfanyl)-alpha-D-ribose 1-phosphate = 5-(methylsulfanyl)-D-ribulose 1-phosphate. It participates in amino-acid biosynthesis; L-methionine biosynthesis via salvage pathway; L-methionine from S-methyl-5-thio-alpha-D-ribose 1-phosphate: step 1/6. Its function is as follows. Catalyzes the interconversion of methylthioribose-1-phosphate (MTR-1-P) into methylthioribulose-1-phosphate (MTRu-1-P). The sequence is that of Methylthioribose-1-phosphate isomerase from Fervidobacterium nodosum (strain ATCC 35602 / DSM 5306 / Rt17-B1).